Here is a 297-residue protein sequence, read N- to C-terminus: GTP cyclohydrolase FolE2 (297 aa).

It belongs to the GTP cyclohydrolase IV family.

It carries out the reaction GTP + H2O = 7,8-dihydroneopterin 3'-triphosphate + formate + H(+). The protein operates within cofactor biosynthesis; 7,8-dihydroneopterin triphosphate biosynthesis; 7,8-dihydroneopterin triphosphate from GTP: step 1/1. Converts GTP to 7,8-dihydroneopterin triphosphate. In Pseudomonas fluorescens (strain ATCC BAA-477 / NRRL B-23932 / Pf-5), this protein is GTP cyclohydrolase FolE2.